Consider the following 359-residue polypeptide: Peptide chain release factor 1 (359 aa).

Glutamine 235 carries the post-translational modification N5-methylglutamine.

Belongs to the prokaryotic/mitochondrial release factor family. Post-translationally, methylated by PrmC. Methylation increases the termination efficiency of RF1.

Its subcellular location is the cytoplasm. In terms of biological role, peptide chain release factor 1 directs the termination of translation in response to the peptide chain termination codons UAG and UAA. This Polynucleobacter asymbioticus (strain DSM 18221 / CIP 109841 / QLW-P1DMWA-1) (Polynucleobacter necessarius subsp. asymbioticus) protein is Peptide chain release factor 1.